A 517-amino-acid polypeptide reads, in one-letter code: Superoxide-generating NADPH oxidase heavy chain subunit A (517 aa).

Over 1-19 (MRLPTKEEIQRYWVNEGNK) the chain is Cytoplasmic. The chain crosses the membrane as a helical span at residues 20–40 (LILVILYTLGNIAAFVYTFVH). Topologically, residues 41–62 (YYNSPAFEVVGYGVCFARGCAQ) are extracellular. The Ferric oxidoreductase domain occupies 58–201 (RGCAQLLKLN…LFVVFFGLLV (144 aa)). Residues 63 to 83 (LLKLNCALILVPVLRNLLSFL) form a helical membrane-spanning segment. Topologically, residues 84–97 (RGTFLNNYVPFDKN) are cytoplasmic. Residues 98-118 (IVFHKLIAWVICFATFGHVMA) form a helical membrane-spanning segment. Residues His101 and His115 each contribute to the heme site. Topologically, residues 119–149 (HFNNFRLYQDITPQEYKRILGIDYPNLTPIK) are extracellular. The chain crosses the membrane as a helical span at residues 150–170 (YAFATLAGWTGHVVCIVMVLM). Residues 171-184 (YTSAVESIRRPMFE) lie on the Cytoplasmic side of the membrane. The chain crosses the membrane as a helical span at residues 185 to 205 (GFWYTHHLFVVFFGLLVVHGL). Heme is bound by residues His190 and His203. His206 is a topological domain (extracellular). The chain crosses the membrane as a helical span at residues 207 to 227 (SILEPTSFWKWVIGPCALYIV). Residues 228 to 517 (ERLIRLLRSK…CRFHYNKENF (290 aa)) are Cytoplasmic-facing. The FAD-binding FR-type domain occupies 229–349 (RLIRLLRSKK…DGPFGAASEE (121 aa)). 283–289 (HPFTITS) serves as a coordination point for FAD.

In terms of assembly, composed of a heavy chain and a light chain. FAD is required as a cofactor.

It localises to the membrane. Its function is as follows. Critical component of the membrane-bound oxidase that generates superoxide. It is the terminal component of a respiratory chain that transfers single electrons from cytoplasmic NADPH across the plasma membrane to molecular oxygen on the exterior. The protein is Superoxide-generating NADPH oxidase heavy chain subunit A (noxA) of Dictyostelium discoideum (Social amoeba).